The primary structure comprises 611 residues: Dihydroxy-acid dehydratase (611 aa).

A Mg(2+)-binding site is contributed by D81. A [2Fe-2S] cluster-binding site is contributed by C122. Residues D123 and K124 each contribute to the Mg(2+) site. K124 carries the post-translational modification N6-carboxylysine. C195 serves as a coordination point for [2Fe-2S] cluster. E491 contacts Mg(2+). Catalysis depends on S517, which acts as the Proton acceptor.

It belongs to the IlvD/Edd family. Homodimer. The cofactor is [2Fe-2S] cluster. It depends on Mg(2+) as a cofactor.

The enzyme catalyses (2R)-2,3-dihydroxy-3-methylbutanoate = 3-methyl-2-oxobutanoate + H2O. It catalyses the reaction (2R,3R)-2,3-dihydroxy-3-methylpentanoate = (S)-3-methyl-2-oxopentanoate + H2O. It functions in the pathway amino-acid biosynthesis; L-isoleucine biosynthesis; L-isoleucine from 2-oxobutanoate: step 3/4. It participates in amino-acid biosynthesis; L-valine biosynthesis; L-valine from pyruvate: step 3/4. Its function is as follows. Functions in the biosynthesis of branched-chain amino acids. Catalyzes the dehydration of (2R,3R)-2,3-dihydroxy-3-methylpentanoate (2,3-dihydroxy-3-methylvalerate) into 2-oxo-3-methylpentanoate (2-oxo-3-methylvalerate) and of (2R)-2,3-dihydroxy-3-methylbutanoate (2,3-dihydroxyisovalerate) into 2-oxo-3-methylbutanoate (2-oxoisovalerate), the penultimate precursor to L-isoleucine and L-valine, respectively. This is Dihydroxy-acid dehydratase from Brucella canis (strain ATCC 23365 / NCTC 10854 / RM-666).